Consider the following 562-residue polypeptide: 2-hydroxyisobutanoyl-CoA mutase large subunit (562 aa).

(3S)-3-hydroxybutanoyl-CoA is bound by residues 76 to 79 (YPTM), 86 to 88 (TMR), D117, 196 to 198 (TVQ), R235, N240, H245, and R284.

Belongs to the acyl-CoA mutase large subunit family. As to quaternary structure, homotetramer composed of two large substrate-binding subunits (HcmA) and two small cobalamin-binding subunits (HcmB).

The catalysed reaction is 2-hydroxyisobutanoyl-CoA = (3S)-3-hydroxybutanoyl-CoA. Its function is as follows. Together with HcmB, catalyzes the isomerization of 2-hydroxyisobutyryl-CoA and 3-hydroxybutyryl-CoA. Is specific for 2-hydroxyisobutyryl-CoA and (S)-3-hydroxybutyryl-CoA, and shows only very low activity with (R)-3-hydroxybutyryl-CoA, isobutyryl-CoA and butyryl-CoA. In vitro, can isomerize pivalyl-CoA and isovaleryl-CoA, with much lower efficiency. Plays a central role in the degradation of substrates bearing a tert-butyl moiety, such as the fuel oxygenate methyl tert-butyl ether (MTBE) and its metabolites. This is 2-hydroxyisobutanoyl-CoA mutase large subunit from Aquincola tertiaricarbonis.